The chain runs to 328 residues: MKIYYENDIDMEILADKKIAVIGYGSQGEAQARNMADSGLNVIVGLRRGGSSWKKAHDDGMNVMTIEDASREADIIHILIPDEIQETVFEQSIRPYLKEGNTISFSHGYNIHYGYIKAPEGVNVTMVAPKGPGAMVRRTYLEGFGIPGLVAVEVDATGDAMEQALAMAKACGLARAGVLETTFREETETDLFGEQAVLCGGVTELINTAFKTLVRAGYQPEIAYFETCHELKLIVDLIYERGFRGMWHNVSNTAEFGGLTRRGRIITEETEKEMDEILKEIQNGKFAKEWALENRAGAPMLKRMRKLESELEIEEVGSKLRKLCGLEK.

The KARI N-terminal Rossmann domain maps to 1 to 181 (MKIYYENDID…GLARAGVLET (181 aa)). Residues 24–27 (YGSQ), Arg-47, Ser-52, and 82–85 (DEIQ) contribute to the NADP(+) site. His-107 is a catalytic residue. Gly-133 is a binding site for NADP(+). One can recognise a KARI C-terminal knotted domain in the interval 182-327 (TFREETETDL…SKLRKLCGLE (146 aa)). Mg(2+) contacts are provided by Asp-190, Glu-194, Glu-226, and Glu-230. Ser-251 serves as a coordination point for substrate.

It belongs to the ketol-acid reductoisomerase family. Requires Mg(2+) as cofactor.

It catalyses the reaction (2R)-2,3-dihydroxy-3-methylbutanoate + NADP(+) = (2S)-2-acetolactate + NADPH + H(+). The enzyme catalyses (2R,3R)-2,3-dihydroxy-3-methylpentanoate + NADP(+) = (S)-2-ethyl-2-hydroxy-3-oxobutanoate + NADPH + H(+). The protein operates within amino-acid biosynthesis; L-isoleucine biosynthesis; L-isoleucine from 2-oxobutanoate: step 2/4. It participates in amino-acid biosynthesis; L-valine biosynthesis; L-valine from pyruvate: step 2/4. Its function is as follows. Involved in the biosynthesis of branched-chain amino acids (BCAA). Catalyzes an alkyl-migration followed by a ketol-acid reduction of (S)-2-acetolactate (S2AL) to yield (R)-2,3-dihydroxy-isovalerate. In the isomerase reaction, S2AL is rearranged via a Mg-dependent methyl migration to produce 3-hydroxy-3-methyl-2-ketobutyrate (HMKB). In the reductase reaction, this 2-ketoacid undergoes a metal-dependent reduction by NADPH to yield (R)-2,3-dihydroxy-isovalerate. The protein is Ketol-acid reductoisomerase (NADP(+)) of Methanothermobacter thermautotrophicus (strain ATCC 29096 / DSM 1053 / JCM 10044 / NBRC 100330 / Delta H) (Methanobacterium thermoautotrophicum).